A 387-amino-acid polypeptide reads, in one-letter code: 3-ketoacyl-CoA thiolase (387 aa).

Cysteine 91 serves as the catalytic Acyl-thioester intermediate. Catalysis depends on proton acceptor residues histidine 343 and cysteine 373.

It belongs to the thiolase-like superfamily. Thiolase family. As to quaternary structure, heterotetramer of two alpha chains (FadB) and two beta chains (FadA).

The protein resides in the cytoplasm. The catalysed reaction is an acyl-CoA + acetyl-CoA = a 3-oxoacyl-CoA + CoA. It functions in the pathway lipid metabolism; fatty acid beta-oxidation. In terms of biological role, catalyzes the final step of fatty acid oxidation in which acetyl-CoA is released and the CoA ester of a fatty acid two carbons shorter is formed. This Escherichia coli (strain UTI89 / UPEC) protein is 3-ketoacyl-CoA thiolase.